A 160-amino-acid polypeptide reads, in one-letter code: Eukaryotic translation initiation factor 5A (160 aa).

Basic and acidic residues predominate over residues 1 to 10 (MSDDDHHFES). A disordered region spans residues 1-23 (MSDDDHHFESSADAGASKTYPQQ). Lys-52 carries the hypusine modification.

It belongs to the eIF-5A family. In terms of processing, lys-52 undergoes hypusination, a unique post-translational modification that consists in the addition of a butylamino group from spermidine to lysine side chain, leading to the formation of the unusual amino acid hypusine. eIF-5As are the only known proteins to undergo this modification, which is essential for their function.

Functionally, translation factor that promotes translation elongation and termination, particularly upon ribosome stalling at specific amino acid sequence contexts. Binds between the exit (E) and peptidyl (P) site of the ribosome and promotes rescue of stalled ribosome: specifically required for efficient translation of polyproline-containing peptides as well as other motifs that stall the ribosome. Acts as a ribosome quality control (RQC) cofactor by joining the RQC complex to facilitate peptidyl transfer during CAT tailing step. In Dianthus caryophyllus (Carnation), this protein is Eukaryotic translation initiation factor 5A.